A 332-amino-acid polypeptide reads, in one-letter code: tRNA uridine(34) hydroxylase (332 aa).

Positions 123–217 (SDPEVLLVDT…YLEEVKQEES (95 aa)) constitute a Rhodanese domain. Cys-177 (cysteine persulfide intermediate) is an active-site residue. A disordered region spans residues 302-332 (SDVGAVIQSRRDNKENLKKSQVKLNNKKYNK). Residues 310–319 (SRRDNKENLK) are compositionally biased toward basic and acidic residues.

It belongs to the TrhO family.

It catalyses the reaction uridine(34) in tRNA + AH2 + O2 = 5-hydroxyuridine(34) in tRNA + A + H2O. Catalyzes oxygen-dependent 5-hydroxyuridine (ho5U) modification at position 34 in tRNAs. This chain is tRNA uridine(34) hydroxylase, found in Shewanella woodyi (strain ATCC 51908 / MS32).